The following is a 91-amino-acid chain: Small ribosomal subunit protein uS19 (91 aa).

Belongs to the universal ribosomal protein uS19 family.

Functionally, protein S19 forms a complex with S13 that binds strongly to the 16S ribosomal RNA. This Sphingopyxis alaskensis (strain DSM 13593 / LMG 18877 / RB2256) (Sphingomonas alaskensis) protein is Small ribosomal subunit protein uS19.